We begin with the raw amino-acid sequence, 434 residues long: Tol-Pal system protein TolB (434 aa).

An N-terminal signal peptide occupies residues 1-21 (MTVRRALALAALALAVSPALA). Residues 411–434 (GDRQTPVTSGKTDLAAPAWGPLAP) form a disordered region.

The protein belongs to the TolB family. In terms of assembly, the Tol-Pal system is composed of five core proteins: the inner membrane proteins TolA, TolQ and TolR, the periplasmic protein TolB and the outer membrane protein Pal. They form a network linking the inner and outer membranes and the peptidoglycan layer.

Its subcellular location is the periplasm. Part of the Tol-Pal system, which plays a role in outer membrane invagination during cell division and is important for maintaining outer membrane integrity. In Anaeromyxobacter dehalogenans (strain 2CP-1 / ATCC BAA-258), this protein is Tol-Pal system protein TolB.